A 459-amino-acid chain; its full sequence is ATP-dependent protease ATPase subunit HslU (459 aa).

Residues valine 21, glycine 63–glutamate 68, aspartate 273, glutamate 338, and arginine 410 contribute to the ATP site.

This sequence belongs to the ClpX chaperone family. HslU subfamily. In terms of assembly, a double ring-shaped homohexamer of HslV is capped on each side by a ring-shaped HslU homohexamer. The assembly of the HslU/HslV complex is dependent on binding of ATP.

The protein localises to the cytoplasm. Its function is as follows. ATPase subunit of a proteasome-like degradation complex; this subunit has chaperone activity. The binding of ATP and its subsequent hydrolysis by HslU are essential for unfolding of protein substrates subsequently hydrolyzed by HslV. HslU recognizes the N-terminal part of its protein substrates and unfolds these before they are guided to HslV for hydrolysis. This is ATP-dependent protease ATPase subunit HslU from Thermosipho africanus (strain TCF52B).